A 436-amino-acid polypeptide reads, in one-letter code: Phosphomethylpyrimidine synthase (436 aa).

Substrate-binding positions include Asn-69, Met-98, Tyr-127, His-163, 185–187 (SRG), 226–229 (DACR), and Glu-265. His-269 contacts Zn(2+). Tyr-292 provides a ligand contact to substrate. Zn(2+) is bound at residue His-333. 3 residues coordinate [4Fe-4S] cluster: Cys-409, Cys-412, and Cys-416.

Belongs to the ThiC family. [4Fe-4S] cluster serves as cofactor.

It catalyses the reaction 5-amino-1-(5-phospho-beta-D-ribosyl)imidazole + S-adenosyl-L-methionine = 4-amino-2-methyl-5-(phosphooxymethyl)pyrimidine + CO + 5'-deoxyadenosine + formate + L-methionine + 3 H(+). It functions in the pathway cofactor biosynthesis; thiamine diphosphate biosynthesis. Functionally, catalyzes the synthesis of the hydroxymethylpyrimidine phosphate (HMP-P) moiety of thiamine from aminoimidazole ribotide (AIR) in a radical S-adenosyl-L-methionine (SAM)-dependent reaction. This Clostridium perfringens (strain SM101 / Type A) protein is Phosphomethylpyrimidine synthase.